A 188-amino-acid chain; its full sequence is UPF0461 protein C5orf24 (188 aa).

Residues 1–10 (MMHPVASSNP) show a composition bias toward polar residues. Residues 1 to 20 (MMHPVASSNPAFCGPGKPSC) form a disordered region. Phosphoserine is present on Ser37. A Glycyl lysine isopeptide (Lys-Gly) (interchain with G-Cter in SUMO2) cross-link involves residue Lys75. Residues 79–142 (KKKKNLNRSG…GYKVSPGRPP (64 aa)) form a disordered region. The segment covering 80-92 (KKKNLNRSGKRGR) has biased composition (basic residues). Residues 94 to 107 (SGTTKSAGYRTSTG) are compositionally biased toward polar residues. Ser121 and Ser180 each carry phosphoserine. Residue Lys184 forms a Glycyl lysine isopeptide (Lys-Gly) (interchain with G-Cter in SUMO2) linkage.

This sequence belongs to the UPF0461 family.

The protein is UPF0461 protein C5orf24 (C5orf24) of Homo sapiens (Human).